An 83-amino-acid polypeptide reads, in one-letter code: Small ribosomal subunit protein uS17 (83 aa).

The protein belongs to the universal ribosomal protein uS17 family. In terms of assembly, part of the 30S ribosomal subunit.

One of the primary rRNA binding proteins, it binds specifically to the 5'-end of 16S ribosomal RNA. In Colwellia psychrerythraea (strain 34H / ATCC BAA-681) (Vibrio psychroerythus), this protein is Small ribosomal subunit protein uS17.